The chain runs to 226 residues: Orotidine 5'-phosphate decarboxylase (226 aa).

Substrate is bound by residues Asp8, Lys30, 58-67, Thr117, Arg177, Gln186, Gly206, and Arg207; that span reads DLKIHDIPNT. The active-site Proton donor is the Lys60.

It belongs to the OMP decarboxylase family. Type 1 subfamily. As to quaternary structure, homodimer.

It catalyses the reaction orotidine 5'-phosphate + H(+) = UMP + CO2. It participates in pyrimidine metabolism; UMP biosynthesis via de novo pathway; UMP from orotate: step 2/2. Catalyzes the decarboxylation of orotidine 5'-monophosphate (OMP) to uridine 5'-monophosphate (UMP). The polypeptide is Orotidine 5'-phosphate decarboxylase (Campylobacter jejuni subsp. jejuni serotype O:6 (strain 81116 / NCTC 11828)).